We begin with the raw amino-acid sequence, 350 residues long: E3 ubiquitin-protein ligase TRIM63 (350 aa).

An RING-type zinc finger spans residues 23 to 79; that stretch reads CPICLEMFTKPVVILPCQHNLCRKCANDIFQAANPYWTNRGGSVSMSGGRFRCPSCR. The tract at residues 74 to 218 is interaction with TTN; that stretch reads RCPSCRHEVI…LSQKFDTLYA (145 aa). A B box-type zinc finger spans residues 117–159; it reads GSHPMCKEHEDEKINIYCLTCEVPTCSLCKVFGAHQACEVAPL. The Zn(2+) site is built by cysteine 122, histidine 125, cysteine 145, and histidine 151. The stretch at 207–269 forms a coiled coil; that stretch reads EELSQKFDTL…VETAIQSLDE (63 aa). A COS domain is found at 267–325; that stretch reads LDEPGGATFLSSAKQLIKSNVEASKGCQLGKTEQGFENMDYFTLDLEHIAEALRAIDFG. A compositionally biased stretch (acidic residues) spans 325–344; that stretch reads GTDEEEEEFTEEEADEEEGV. The interval 325–350 is disordered; the sequence is GTDEEEEEFTEEEADEEEGVTTEGHQ.

Homodimer. Homooligomer and heterooligomer. Interacts with SUMO2, titin/TTN and GMEB1. Interacts with TRIM54 and probably with TRIM55. Interacts with TNNI3. Forms a ternary complex with RACK1 and PRKCE. Interacts with CKM.

It localises to the cytoplasm. The protein resides in the nucleus. Its subcellular location is the myofibril. The protein localises to the sarcomere. It is found in the m line. It localises to the z line. The catalysed reaction is S-ubiquitinyl-[E2 ubiquitin-conjugating enzyme]-L-cysteine + [acceptor protein]-L-lysine = [E2 ubiquitin-conjugating enzyme]-L-cysteine + N(6)-ubiquitinyl-[acceptor protein]-L-lysine.. Its pathway is protein modification; protein ubiquitination. E3 ubiquitin ligase. Mediates the ubiquitination and subsequent proteasomal degradation of CKM, GMEB1 and HIBADH. Regulates the proteasomal degradation of muscle proteins under amino acid starvation, where muscle protein is catabolized to provide other organs with amino acids. Inhibits de novo skeletal muscle protein synthesis under amino acid starvation. Regulates proteasomal degradation of cardiac troponin I/TNNI3 and probably of other sarcomeric-associated proteins. May play a role in striated muscle atrophy and hypertrophy by regulating an anti-hypertrophic PKC-mediated signaling pathway. May regulate the organization of myofibrils through TTN in muscle cells. This chain is E3 ubiquitin-protein ligase TRIM63 (Trim63), found in Mus musculus (Mouse).